A 185-amino-acid polypeptide reads, in one-letter code: MNWRSEHVWVELLKGSRKRGNFFWACILFLGSLGFLSVGASSYLGKNIISILPSQQILFFPQGVVMSFYGIAGLFISSYLWCTILWNVGSGYDRFDRKEGIVCIFRWGFPGIKRRVFLQFLMRDIQSIRIQVKEGLSPRRILYMEIRGQGVIPLTRTDEKFFTPREMEQKAAELAYFLRVPIEVF.

2 helical membrane-spanning segments follow: residues 20–40 (GNFFWACILFLGSLGFLSVGA) and 57–77 (ILFFPQGVVMSFYGIAGLFIS).

It belongs to the Ycf4 family.

Its subcellular location is the plastid. It is found in the chloroplast thylakoid membrane. Seems to be required for the assembly of the photosystem I complex. This is Photosystem I assembly protein Ycf4 from Lolium perenne (Perennial ryegrass).